A 159-amino-acid chain; its full sequence is Cyclic pyranopterin monophosphate synthase (159 aa).

Substrate is bound by residues 75–77 and 113–114; these read LCH and ME. The active site involves D128.

The protein belongs to the MoaC family. As to quaternary structure, homohexamer; trimer of dimers.

It carries out the reaction (8S)-3',8-cyclo-7,8-dihydroguanosine 5'-triphosphate = cyclic pyranopterin phosphate + diphosphate. It participates in cofactor biosynthesis; molybdopterin biosynthesis. In terms of biological role, catalyzes the conversion of (8S)-3',8-cyclo-7,8-dihydroguanosine 5'-triphosphate to cyclic pyranopterin monophosphate (cPMP). This is Cyclic pyranopterin monophosphate synthase from Vibrio vulnificus (strain YJ016).